The chain runs to 88 residues: MKSKEILGYDIKEISNQTVEQLIEKKKELQGKLNDLQQELLKRKVEARMGTLKNTASIRNLRKDIARILTLLSIINKEIENKKKESKK.

It belongs to the universal ribosomal protein uL29 family.

The protein is Large ribosomal subunit protein uL29 (rpl29) of Sulfurisphaera tokodaii (strain DSM 16993 / JCM 10545 / NBRC 100140 / 7) (Sulfolobus tokodaii).